The chain runs to 865 residues: Alanine--tRNA ligase (865 aa).

Zn(2+) contacts are provided by histidine 554, histidine 558, cysteine 656, and histidine 660.

Belongs to the class-II aminoacyl-tRNA synthetase family. It depends on Zn(2+) as a cofactor.

The protein localises to the cytoplasm. It carries out the reaction tRNA(Ala) + L-alanine + ATP = L-alanyl-tRNA(Ala) + AMP + diphosphate. Functionally, catalyzes the attachment of alanine to tRNA(Ala) in a two-step reaction: alanine is first activated by ATP to form Ala-AMP and then transferred to the acceptor end of tRNA(Ala). Also edits incorrectly charged Ser-tRNA(Ala) and Gly-tRNA(Ala) via its editing domain. This is Alanine--tRNA ligase from Francisella tularensis subsp. tularensis (strain WY96-3418).